We begin with the raw amino-acid sequence, 217 residues long: Uracil-DNA glycosylase (217 aa).

The active-site Proton acceptor is aspartate 62.

Belongs to the uracil-DNA glycosylase (UDG) superfamily. UNG family.

Its subcellular location is the cytoplasm. It carries out the reaction Hydrolyzes single-stranded DNA or mismatched double-stranded DNA and polynucleotides, releasing free uracil.. Functionally, excises uracil residues from the DNA which can arise as a result of misincorporation of dUMP residues by DNA polymerase or due to deamination of cytosine. In Streptococcus suis (strain 98HAH33), this protein is Uracil-DNA glycosylase.